The sequence spans 563 residues: Cystathionine gamma-synthase-like protein ankD (563 aa).

Positions 1–37 (MGELGPASAQHGSDSISFSGSYTQPLGAPQPPNEPHA) are disordered. Positions 10–24 (QHGSDSISFSGSYTQ) are enriched in polar residues.

The protein belongs to the trans-sulfuration enzymes family. MET7 subfamily. Requires pyridoxal 5'-phosphate as cofactor.

The enzyme catalyses cyclo(L-arginyl-(Z)-dehydro-3,4-dihydroxytyrosyl) + O-acetyl-L-homoserine = cyclo(L-arginyl-(Z)-dehydro-4-O-homoseryl-tyrosyl) + acetate + H(+). It functions in the pathway secondary metabolite biosynthesis. Cystathionine gamma-synthase-like protein; part of the ank cluster that mediates the biosynthesis of NK13650 C, a highly modified cyclo-arginine-tyrosine dipeptide. AnkD catalyzes the attachment of L-homoserine moiety using O-acetyl-L-homoserine as co-substrate. Within the pathway, the cyclodipeptide synthase ankA acts as the scaffold-generating enzyme and is responsible for formation of the cyclo-Arg-Tyr diketopiperazine (cRY) from L-Arg and L-Tyr. The ankA product cRY is desaturated by the cytochrome P450 monooxygenase ankB to yield a dehydro-cyclodipeptide intermediate. The FAD-dependent monooxygenase ankC then installs the m-OH, ankD catalyzes the attachment of L-homoserine, and ankE ligates citrate to the ankD product to yield NK13650 B. The O-methyltransferase ankF is responsible for methylation of the C-17 phenol group of NK13650 B to produce NK13650 D. Amidation of NK13650 D with L-Asp by ankG then leads to the production of NK13650 C, whereas amidation of NK13650 B produces NK13650 A. The protein is Cystathionine gamma-synthase-like protein ankD of Aspergillus thermomutatus (Neosartorya pseudofischeri).